Here is a 182-residue protein sequence, read N- to C-terminus: Large ribosomal subunit protein uL6 (182 aa).

The protein belongs to the universal ribosomal protein uL6 family. In terms of assembly, part of the 50S ribosomal subunit.

Functionally, this protein binds to the 23S rRNA, and is important in its secondary structure. It is located near the subunit interface in the base of the L7/L12 stalk, and near the tRNA binding site of the peptidyltransferase center. This is Large ribosomal subunit protein uL6 from Pelotomaculum thermopropionicum (strain DSM 13744 / JCM 10971 / SI).